Consider the following 187-residue polypeptide: Auxin-binding protein T85 (187 aa).

Residues 1-20 (MARHVLVVVAVLLFATAEAS) form the signal peptide. Cysteines 22 and 177 form a disulfide. H78, H80, and E84 together coordinate Zn(2+). N117 carries N-linked (GlcNAc...) asparagine glycosylation. H128 contributes to the Zn(2+) binding site. The short motif at 184–187 (KDEL) is the Prevents secretion from ER element.

As to quaternary structure, homodimer.

It is found in the endoplasmic reticulum lumen. In terms of biological role, this is probably a receptor for the plant hormone auxin. The sequence is that of Auxin-binding protein T85 (T85) from Nicotiana tabacum (Common tobacco).